Reading from the N-terminus, the 194-residue chain is Adenine phosphoribosyltransferase (194 aa).

This sequence belongs to the purine/pyrimidine phosphoribosyltransferase family. Homodimer.

It is found in the cytoplasm. It carries out the reaction AMP + diphosphate = 5-phospho-alpha-D-ribose 1-diphosphate + adenine. It participates in purine metabolism; AMP biosynthesis via salvage pathway; AMP from adenine: step 1/1. Catalyzes a salvage reaction resulting in the formation of AMP, that is energically less costly than de novo synthesis. This chain is Adenine phosphoribosyltransferase, found in Albidiferax ferrireducens (strain ATCC BAA-621 / DSM 15236 / T118) (Rhodoferax ferrireducens).